A 372-amino-acid polypeptide reads, in one-letter code: O-glycoside alpha-1,2-mannosyltransferase homolog 2 (372 aa).

Over 1-6 (MRISRL) the chain is Cytoplasmic. Residues 7 to 27 (LIRVLLGFVILFITYILFPSI) form a helical; Signal-anchor for type II membrane protein membrane-spanning segment. Over 28 to 372 (PKALVNTLNV…NLTNEDYDEL (345 aa)) the chain is Lumenal. Glu-271 functions as the Nucleophile in the catalytic mechanism.

The protein belongs to the glycosyltransferase 15 family.

Its subcellular location is the endoplasmic reticulum membrane. Its function is as follows. Probable mannosyltransferase involved in O-glycosylation of cell wall and secreted proteins. The sequence is that of O-glycoside alpha-1,2-mannosyltransferase homolog 2 (omh2) from Schizosaccharomyces pombe (strain 972 / ATCC 24843) (Fission yeast).